The primary structure comprises 301 residues: tRNA dimethylallyltransferase 1 (301 aa).

11 to 18 (GPTGVGKT) contributes to the ATP binding site. Residue 13–18 (TGVGKT) coordinates substrate. The segment at 36 to 39 (DSRQ) is interaction with substrate tRNA.

This sequence belongs to the IPP transferase family. Monomer. Mg(2+) is required as a cofactor.

It carries out the reaction adenosine(37) in tRNA + dimethylallyl diphosphate = N(6)-dimethylallyladenosine(37) in tRNA + diphosphate. Functionally, catalyzes the transfer of a dimethylallyl group onto the adenine at position 37 in tRNAs that read codons beginning with uridine, leading to the formation of N6-(dimethylallyl)adenosine (i(6)A). In Bacteroides fragilis (strain YCH46), this protein is tRNA dimethylallyltransferase 1.